Here is a 536-residue protein sequence, read N- to C-terminus: Ecdysone receptor (536 aa).

The segment at 1-114 is modulating; the sequence is MKTENLIVTT…GPVPRQQEEL (114 aa). The disordered stretch occupies residues 77 to 107; the sequence is SPNSKLDDGNMSVHMGDGLDGKKSSSKKGPV. 2 NR C4-type zinc fingers span residues 115-135 and 151-175; these read CLVC…CEGC and CKFG…LKKC. The nuclear receptor DNA-binding region spans 115–187; it reads CLVCGDRASG…VGMRPECVVP (73 aa). Residues 278–514 enclose the NR LBD domain; it reads NQVAVIYKLI…FLEEVWDVGD (237 aa).

This sequence belongs to the nuclear hormone receptor family. NR1 subfamily.

Its subcellular location is the nucleus. Receptor for ecdysone. Binds to ecdysone response elements (ECRES). The sequence is that of Ecdysone receptor (EcR) from Chironomus tentans (Midge).